The sequence spans 419 residues: Serine hydroxymethyltransferase (419 aa).

(6S)-5,6,7,8-tetrahydrofolate contacts are provided by residues Leu-118 and 122-124; that span reads GHL. Lys-227 bears the N6-(pyridoxal phosphate)lysine mark.

This sequence belongs to the SHMT family. In terms of assembly, homodimer. Requires pyridoxal 5'-phosphate as cofactor.

The protein localises to the cytoplasm. It catalyses the reaction (6R)-5,10-methylene-5,6,7,8-tetrahydrofolate + glycine + H2O = (6S)-5,6,7,8-tetrahydrofolate + L-serine. It functions in the pathway one-carbon metabolism; tetrahydrofolate interconversion. Its pathway is amino-acid biosynthesis; glycine biosynthesis; glycine from L-serine: step 1/1. In terms of biological role, catalyzes the reversible interconversion of serine and glycine with tetrahydrofolate (THF) serving as the one-carbon carrier. This reaction serves as the major source of one-carbon groups required for the biosynthesis of purines, thymidylate, methionine, and other important biomolecules. Also exhibits THF-independent aldolase activity toward beta-hydroxyamino acids, producing glycine and aldehydes, via a retro-aldol mechanism. The polypeptide is Serine hydroxymethyltransferase (Chloroflexus aurantiacus (strain ATCC 29364 / DSM 637 / Y-400-fl)).